The primary structure comprises 306 residues: 33 kDa chaperonin (306 aa).

2 disulfide bridges follow: Cys242/Cys244 and Cys275/Cys278.

The protein belongs to the HSP33 family. Post-translationally, under oxidizing conditions two disulfide bonds are formed involving the reactive cysteines. Under reducing conditions zinc is bound to the reactive cysteines and the protein is inactive.

Its subcellular location is the cytoplasm. Functionally, redox regulated molecular chaperone. Protects both thermally unfolding and oxidatively damaged proteins from irreversible aggregation. Plays an important role in the bacterial defense system toward oxidative stress. This chain is 33 kDa chaperonin, found in Gloeobacter violaceus (strain ATCC 29082 / PCC 7421).